The primary structure comprises 448 residues: Adenylosuccinate synthetase (448 aa).

GTP-binding positions include 36–42 and 64–66; these read GDEGKGK and GHT. Aspartate 37 acts as the Proton acceptor in catalysis. 2 residues coordinate Mg(2+): aspartate 37 and glycine 64. IMP is bound by residues 37-40, 62-65, threonine 154, arginine 168, asparagine 246, threonine 261, and arginine 325; these read DEGK and NAGH. Histidine 65 (proton donor) is an active-site residue. 321–327 is a binding site for substrate; it reads VTTKRKR. Residues arginine 327, 353–355, and 436–438 each bind GTP; these read KLD and GVG.

This sequence belongs to the adenylosuccinate synthetase family. In terms of assembly, homodimer. Mg(2+) is required as a cofactor.

It localises to the cytoplasm. It catalyses the reaction IMP + L-aspartate + GTP = N(6)-(1,2-dicarboxyethyl)-AMP + GDP + phosphate + 2 H(+). It participates in purine metabolism; AMP biosynthesis via de novo pathway; AMP from IMP: step 1/2. Plays an important role in the de novo pathway and in the salvage pathway of purine nucleotide biosynthesis. Catalyzes the first committed step in the biosynthesis of AMP from IMP. The sequence is that of Adenylosuccinate synthetase from Drosophila virilis (Fruit fly).